The chain runs to 193 residues: ECF RNA polymerase sigma factor SigK (193 aa).

The sigma-70 factor domain-2 stretch occupies residues 35–101 (LYDRTRSRVY…RRAVDRVRSE (67 aa)). The Polymerase core binding signature appears at 59-62 (ETTQ). Residues 140–187 (MGSLSDLQREAIQLAYYEGLTYVQVSERLSANLATIKSRMRDGIRGLK) form a sigma-70 factor domain-4 region. Positions 161–180 (YVQVSERLSANLATIKSRMR) form a DNA-binding region, H-T-H motif.

Belongs to the sigma-70 factor family. ECF subfamily. As to quaternary structure, interacts transiently with the RNA polymerase catalytic core formed by RpoA, RpoB, RpoC and RpoZ (2 alpha, 1 beta, 1 beta' and 1 omega subunit) to form the RNA polymerase holoenzyme that can initiate transcription. Interacts (via sigma-70 factor domain 4) with anti-sigma-K factor RskA.

Functionally, sigma factors are initiation factors that promote the attachment of RNA polymerase to specific initiation sites and are then released. Extracytoplasmic function (ECF) sigma factors are held in an inactive form by an anti-sigma factor until released by regulated intramembrane proteolysis. The protein is ECF RNA polymerase sigma factor SigK (sigK) of Mycobacterium sp. (strain JLS).